The chain runs to 449 residues: Mitochondrial distribution and morphology protein 10 (449 aa).

Disordered regions lie at residues 215–244 (GPSE…DEED) and 282–307 (DATP…GAPS). A compositionally biased stretch (low complexity) spans 285–301 (PPSFQLPSSSPTQPSLL).

Belongs to the MDM10 family. Component of the ER-mitochondria encounter structure (ERMES) or MDM complex, composed of MMM1, MDM10, MDM12 and MDM34. Associates with the mitochondrial outer membrane sorting assembly machinery SAM(core) complex.

The protein localises to the mitochondrion outer membrane. In terms of biological role, component of the ERMES/MDM complex, which serves as a molecular tether to connect the endoplasmic reticulum and mitochondria. Components of this complex are involved in the control of mitochondrial shape and protein biogenesis and may function in phospholipid exchange. MDM10 is involved in the late assembly steps of the general translocase of the mitochondrial outer membrane (TOM complex). Functions in the TOM40-specific route of the assembly of outer membrane beta-barrel proteins, including the association of TOM40 with the receptor TOM22 and small TOM proteins. Can associate with the SAM(core) complex as well as the MDM12-MMM1 complex, both involved in late steps of the major beta-barrel assembly pathway, that is responsible for biogenesis of all outer membrane beta-barrel proteins. May act as a switch that shuttles between both complexes and channels precursor proteins into the TOM40-specific pathway. Plays a role in mitochondrial morphology and in the inheritance of mitochondria. This chain is Mitochondrial distribution and morphology protein 10, found in Postia placenta (strain ATCC 44394 / Madison 698-R) (Brown rot fungus).